A 239-amino-acid polypeptide reads, in one-letter code: RNA polymerase sigma-35 factor (239 aa).

Residues 1–27 constitute a propeptide that is removed on maturation; that stretch reads MMKLKFYLVYLWYKVLLKLGIKTDEIY. Residues 86–99 carry the Polymerase core binding motif; it reads DLISIGTIGLIKAV. Residues 206-225 constitute a DNA-binding region (H-T-H motif); the sequence is QKDVADMLGISQSYISRLEK.

This sequence belongs to the sigma-70 factor family. In terms of processing, proteolytically cleaved in the N-terminus probably by a SpoIIGA homolog to yield the active peptide.

Sigma factors are initiation factors that promote the attachment of RNA polymerase to specific initiation sites and are then released. This sigma factor directs the transcription of crystal protein genes, a sporulation-regulated event. This chain is RNA polymerase sigma-35 factor (sigE), found in Bacillus anthracis.